Reading from the N-terminus, the 1475-residue chain is Alpha-glucan water dikinase, chloroplastic (1475 aa).

The transit peptide at 1–85 directs the protein to the chloroplast; sequence MSNSIGRNVL…HRPVLITPRA (85 aa). H1077 acts as the Tele-phosphohistidine intermediate in catalysis.

The protein belongs to the PEP-utilizing enzyme family. In terms of assembly, homodimer. It depends on Mg(2+) as a cofactor.

It localises to the plastid. It is found in the chloroplast. It catalyses the reaction [(1-&gt;4)-alpha-D-glucosyl](n) + n ATP + n H2O = [(1-&gt;4)-6-phospho-alpha-D-glucosyl](n) + n AMP + n phosphate + 2n H(+). In terms of biological role, mediates the incorporation of phosphate into starch-like alpha-glucan, mostly at the C-6 position of glucose units. Acts as an overall regulator of starch mobilization. Required for starch degradation, suggesting that the phosphate content of starch regulates its degradability. The polypeptide is Alpha-glucan water dikinase, chloroplastic (R1) (Citrus reticulata (Tangerine)).